The sequence spans 411 residues: NADH-quinone oxidoreductase subunit D 2 (411 aa).

Belongs to the complex I 49 kDa subunit family. In terms of assembly, NDH-1 is composed of 14 different subunits. Subunits NuoB, C, D, E, F, and G constitute the peripheral sector of the complex.

It localises to the cell membrane. It catalyses the reaction a quinone + NADH + 5 H(+)(in) = a quinol + NAD(+) + 4 H(+)(out). NDH-1 shuttles electrons from NADH, via FMN and iron-sulfur (Fe-S) centers, to quinones in the respiratory chain. The immediate electron acceptor for the enzyme in this species is believed to be ubiquinone. Couples the redox reaction to proton translocation (for every two electrons transferred, four hydrogen ions are translocated across the cytoplasmic membrane), and thus conserves the redox energy in a proton gradient. The chain is NADH-quinone oxidoreductase subunit D 2 from Chloroflexus aurantiacus (strain ATCC 29366 / DSM 635 / J-10-fl).